The following is a 131-amino-acid chain: Small ribosomal subunit protein bS6 (131 aa).

The interval 97–131 is disordered; it reads TEASPMVKAKDERRRDVAEDLDEEEVDDVAEDSEE. A compositionally biased stretch (basic and acidic residues) spans 104–114; sequence KAKDERRRDVA. The span at 115–131 shows a compositional bias: acidic residues; that stretch reads EDLDEEEVDDVAEDSEE.

This sequence belongs to the bacterial ribosomal protein bS6 family.

Its function is as follows. Binds together with bS18 to 16S ribosomal RNA. The chain is Small ribosomal subunit protein bS6 from Proteus mirabilis (strain HI4320).